Here is a 79-residue protein sequence, read N- to C-terminus: Putative defensin-like protein 309 (79 aa).

The first 19 residues, 1–19 (MKILAFFIFVLLIFSCSSS), serve as a signal peptide directing secretion. Disulfide bonds link Cys-31–Cys-50, Cys-37–Cys-55, and Cys-41–Cys-57.

Belongs to the DEFL family.

Its subcellular location is the secreted. The chain is Putative defensin-like protein 309 from Arabidopsis thaliana (Mouse-ear cress).